Here is a 104-residue protein sequence, read N- to C-terminus: Protein enhancer of rudimentary (104 aa).

Thr18 carries the phosphothreonine; by CK2 modification. Ser24 is modified (phosphoserine; by CK2).

It belongs to the E(R) family.

Its function is as follows. Acts as an enhancer of the rudimentary gene. Has a role in pyrimidine biosynthesis and the cell cycle. This Drosophila virilis (Fruit fly) protein is Protein enhancer of rudimentary (e(r)).